Here is a 416-residue protein sequence, read N- to C-terminus: Orexin/Hypocretin receptor type 1 (416 aa).

A disordered region spans residues Met-1 to His-22. The Extracellular portion of the chain corresponds to Met-1–Glu-46. Residues Asp-26 to Tyr-41 form a required for response to orexin-A region. A helical membrane pass occupies residues Trp-47–Val-67. Topologically, residues Cys-68–Asn-82 are cytoplasmic. The chain crosses the membrane as a helical span at residues Tyr-83–Leu-105. Residues Val-106–Cys-119 are Extracellular-facing. An intrachain disulfide couples Cys-119 to Cys-202. Residues Lys-120–Ile-140 form a helical membrane-spanning segment. Topologically, residues Ala-141–Arg-160 are cytoplasmic. The chain crosses the membrane as a helical span at residues Ala-161–Val-182. At Met-183–Lys-213 the chain is on the extracellular side. A glycan (N-linked (GlcNAc...) asparagine) is linked at Asn-194. The chain crosses the membrane as a helical span at residues Ile-214–Tyr-235. The Cytoplasmic segment spans residues Phe-236–Lys-298. The helical transmembrane segment at Met-299–Lys-321 threads the bilayer. Residues Arg-322–Val-336 are Extracellular-facing. The chain crosses the membrane as a helical span at residues Tyr-337–Phe-360. Residues Leu-361–Ser-416 are Cytoplasmic-facing.

The protein belongs to the G-protein coupled receptor 1 family. In terms of tissue distribution, widely expressed.

Its subcellular location is the cell membrane. Its function is as follows. Moderately selective excitatory receptor for orexin-A and, with a lower affinity, for orexin-B neuropeptide. Triggers an increase in cytoplasmic Ca(2+) levels in response to orexin-A binding. In Mus musculus (Mouse), this protein is Orexin/Hypocretin receptor type 1.